The sequence spans 314 residues: PDZ domain-containing protein GIPC2 (314 aa).

A compositionally biased stretch (basic residues) spans M1–A12. Residues M1–P36 are disordered. A compositionally biased stretch (basic and acidic residues) spans K13–R25. Residues E117–E197 form the PDZ domain.

The protein belongs to the GIPC family. In terms of assembly, probably interacts with SEMA5A. In terms of tissue distribution, expressed in kidney and lung (at protein level).

It is found in the cytoplasm. The chain is PDZ domain-containing protein GIPC2 (Gipc2) from Mus musculus (Mouse).